The primary structure comprises 1595 residues: Collagen-like protein 2 (1595 aa).

N87 and N134 each carry an N-linked (GlcNAc...) asparagine; by host glycan. Collagen-like domains follow at residues 97–155, 175–233, 236–295, and 299–358; these read LRGE…NGDV, QVGL…KGEG, GSKG…KGDI, and GIKG…KGMK. Over residues 181–190 the composition is skewed to low complexity; sequence SQGDQGYKGD. Disordered regions lie at residues 181–577 and 604–1326; these read SQGD…SPDL and TDIK…GIKG. Basic and acidic residues-rich tracts occupy residues 191 to 200, 209 to 448, 456 to 466, 474 to 501, 510 to 561, 606 to 615, 622 to 702, 718 to 825, 832 to 883, 895 to 1041, 1048 to 1098, 1107 to 1151, 1159 to 1250, and 1265 to 1300; these read QGSKGDKGQK, KGDK…KGTK, YKGDIGDKGIK, DKGDKGIKGDKGDKGIKGDDGSKGDKGY, DNGE…DKGE, IKGEKGDKGE, KGDK…DKGD, KGDK…DKGI, KGDK…KGFK, KGNK…DQGT, KGDK…KGIK, NKGD…KGDQ, and KGDKGDKGDKGDKGDKGDKGAKGDKGDKGDKGDQGI. N274, N280, and N286 each carry an N-linked (GlcNAc...) asparagine; by host glycan. Residues N373, N382, N400, and N409 are each glycosylated (N-linked (GlcNAc...) asparagine; by host). 5 Collagen-like domains span residues 380-559, 608-907, 920-1039, 1043-1102, and 1128-1307; these read GDNG…KGDK, GEKG…KGEN, GDKG…KGDK, GTNG…KGET, and GDQG…SGAS. N1345, N1420, and N1545 each carry an N-linked (GlcNAc...) asparagine; by host glycan. The tract at residues 1538-1585 is disordered; it reads SAFDKGGNGSIRFNPPSSGTKGSGGGGSVQGGGGTIPNDGYPGGNGGP. The span at 1558–1585 shows a compositional bias: gly residues; it reads KGSGGGGSVQGGGGTIPNDGYPGGNGGP.

Post-translationally, may be hydroxylated on lysine by the viral-encoded procollagen-lysine,2-oxoglutarate 5-dioxygenase.

The protein resides in the virion. Functionally, may participate in the formation of a layer of cross-linked glycosylated fibrils at the viral surface thus giving it a hairy-like appearance. The protein is Collagen-like protein 2 of Acanthamoeba polyphaga (Amoeba).